A 606-amino-acid polypeptide reads, in one-letter code: Calmegin (606 aa).

The first 19 residues, 1–19 (MRFQGFWLCLGLLFISVNA), serve as a signal peptide directing secretion. Topologically, residues 20-466 (EFMDDSVEME…QLMSATEQRP (447 aa)) are lumenal. At K124 the chain carries N6-acetyllysine. C147 and C181 are oxidised to a cystine. The segment at 255 to 308 (PPINPPKEIEDPTDEKPDDWDERAKIPDASAVKPEDWDESEPPQIVDSSAVKPD) is disordered. Tandem repeats lie at residues 263 to 276 (IEDP…DWDE), 280 to 293 (IPDA…DWDE), 299 to 312 (IVDS…GWLD), 318 to 331 (IPDP…DWNE), 335 to 348 (GEWE…PACR), 352 to 365 (GEWS…PKYK), 366 to 379 (GIWR…PNYQ), and 380 to 393 (GIWS…PDYF). The segment covering 265–275 (DPTDEKPDDWD) has biased composition (acidic residues). Positions 313 to 346 (NEPEFIPDPNAEKPFDWNEDMDGEWEAPHISNPA) are interaction with PPIB. A disulfide bridge links C347 with C351. Residues 467–487 (WLWFIYLLTAALPIALIGSFC) form a helical membrane-spanning segment. At 488–606 (WPRKVKKKYE…SVRKRRVRKE (119 aa)) the chain is on the cytoplasmic side. Basic and acidic residues predominate over residues 518–544 (EVKEEKAALEKPVDLEEEKKQSDGEIV). Positions 518–606 (EVKEEKAALE…SVRKRRVRKE (89 aa)) are disordered. Acidic residues predominate over residues 545–567 (EKEEEGEPEEKSEEEIEIIEGQE). S556, S572, S575, S577, S587, S590, and S597 each carry phosphoserine. Residues 568 to 579 (EGNKSNKSGSED) are compositionally biased toward basic and acidic residues. Residues 597-606 (SVRKRRVRKE) show a composition bias toward basic residues.

Belongs to the calreticulin family. In terms of assembly, interacts with PPIB and PDILT. Interacts with ADAM2.

It is found in the endoplasmic reticulum membrane. In terms of biological role, functions during spermatogenesis as a chaperone for a range of client proteins that are important for sperm adhesion onto the egg zona pellucida and for subsequent penetration of the zona pellucida. Required for normal sperm migration from the uterus into the oviduct. Required for normal male fertility. Binds calcium ions. This Bos taurus (Bovine) protein is Calmegin (CLGN).